The chain runs to 274 residues: 2-dehydro-3-deoxyphosphooctonate aldolase (274 aa).

The protein belongs to the KdsA family.

It localises to the cytoplasm. The enzyme catalyses D-arabinose 5-phosphate + phosphoenolpyruvate + H2O = 3-deoxy-alpha-D-manno-2-octulosonate-8-phosphate + phosphate. The protein operates within carbohydrate biosynthesis; 3-deoxy-D-manno-octulosonate biosynthesis; 3-deoxy-D-manno-octulosonate from D-ribulose 5-phosphate: step 2/3. It participates in bacterial outer membrane biogenesis; lipopolysaccharide biosynthesis. The protein is 2-dehydro-3-deoxyphosphooctonate aldolase of Rickettsia felis (strain ATCC VR-1525 / URRWXCal2) (Rickettsia azadi).